The chain runs to 273 residues: uncharacterized protein (273 aa).

This is an uncharacterized protein from Acanthamoeba polyphaga mimivirus (APMV).